An 87-amino-acid polypeptide reads, in one-letter code: Ribonuclease P protein component 1 (87 aa).

Belongs to the eukaryotic/archaeal RNase P protein component 1 family. As to quaternary structure, consists of a catalytic RNA component and at least 4-5 protein subunits.

It is found in the cytoplasm. The enzyme catalyses Endonucleolytic cleavage of RNA, removing 5'-extranucleotides from tRNA precursor.. Part of ribonuclease P, a protein complex that generates mature tRNA molecules by cleaving their 5'-ends. This chain is Ribonuclease P protein component 1, found in Thermoplasma acidophilum (strain ATCC 25905 / DSM 1728 / JCM 9062 / NBRC 15155 / AMRC-C165).